We begin with the raw amino-acid sequence, 493 residues long: F(420)H(2) dehydrogenase subunit N (493 aa).

14 consecutive transmembrane segments (helical) span residues Leu7–Leu27, Ile34–Phe54, Leu78–Ile98, Thr107–Ala127, Leu130–Phe150, Phe165–Ala185, Pro205–Val225, Ala244–Ile264, Trp273–Val293, Ala310–Met330, Leu333–Ile353, Ala381–Met401, Phe404–Leu424, and Ile454–Leu474.

This sequence belongs to the complex I subunit 2 family. The FPO complex is composed of at least 13 different subunits. FpoA, FpoH, FpoJ, FpoK, FpoL, FpoM and FpoN proteins constitute the membrane sector of the complex.

It localises to the cell membrane. It catalyses the reaction methanophenazine + reduced coenzyme F420-(gamma-L-Glu)(n) = dihydromethanophenazine + oxidized coenzyme F420-(gamma-L-Glu)(n) + H(+). Its function is as follows. Component of the F(420)H(2) dehydrogenase (FPO complex) which is part of the energy-conserving F(420)H(2):heterodisulfide oxidoreductase system. The membrane-bound electron transfer system of the complex plays an important role in the metabolism of methylotrophic methanogens when the organisms grow on methanol or methylamines. Catalyzes the oxidation of methanophenazine to dihydromethanophenazine. It shuttles electrons from F(420)H(2), via FAD and iron-sulfur (Fe-S) centers, to methanophenazine (an electron carrier in the membrane). It couples the redox reaction to proton translocation (for every two electrons transferred, two hydrogen ions are translocated across the cytoplasmic membrane), and thus conserves the redox energy in a proton gradient. It also catalyzes the oxidation of F(420)H(2) with quinones such as 2,3-dimethyl-1,4-naphthoquinone, 2-methyl-1,4-naphthoquinone and tetramethyl-p-benzoquinone. The protein is F(420)H(2) dehydrogenase subunit N (fpoN) of Methanosarcina mazei (strain ATCC BAA-159 / DSM 3647 / Goe1 / Go1 / JCM 11833 / OCM 88) (Methanosarcina frisia).